Here is a 371-residue protein sequence, read N- to C-terminus: Mannose-1-phosphate guanylyltransferase catalytic subunit beta (371 aa).

The substrate-binding domain stretch occupies residues 14–233 (RALILVGGYG…TGFWMDIGQP (220 aa)). Asp122 serves as a coordination point for GDP-alpha-D-mannose. Asp122 contacts Mg(2+). Lys173 is a catalytic residue. Residue Asp229 coordinates GDP-alpha-D-mannose. Position 229 (Asp229) interacts with Mg(2+). Residues 256 to 371 (YTGPGVVGNV…ASVPEPQIIM (116 aa)) form a hexapeptide repeat domain region.

This sequence belongs to the transferase hexapeptide repeat family. As to quaternary structure, component of the GMPPA-GMPPB mannose-1-phosphate guanylyltransferase complex composed of 4 Gmppa subunits and 8 Gmppb subunits; the complex is organized into three layers, a central layer made up of 2 Gmppa dimers sandwiched between two layers each made up of 2 Gmppb dimers. Gmppb catalytic activity is reduced when part of the complex and binding of GDP-alpha-D-Mannose by Gmppa induces allosteric feedback inhibition of Gmppb. It depends on Mg(2+) as a cofactor.

The catalysed reaction is alpha-D-mannose 1-phosphate + GTP + H(+) = GDP-alpha-D-mannose + diphosphate. It functions in the pathway nucleotide-sugar biosynthesis; GDP-alpha-D-mannose biosynthesis; GDP-alpha-D-mannose from alpha-D-mannose 1-phosphate (GTP route): step 1/1. Enzyme activity is reduced by incorporation into the GMPPA-GMPPB mannose-1-phosphate guanylyltransferase complex. Allosterically inhibited, when part of the GMPPA-GMPPB complex, by GDP-alpha-D-mannose binding to Gmppa. Its function is as follows. Catalytic subunit of the GMPPA-GMPPB mannose-1-phosphate guanylyltransferase complex. Catalyzes the formation of GDP-mannose, an essential precursor of glycan moieties of glycoproteins and glycolipids. Can catalyze the reverse reaction in vitro. Together with GMPPA regulates GDP-alpha-D-mannose levels. This is Mannose-1-phosphate guanylyltransferase catalytic subunit beta from Drosophila pseudoobscura pseudoobscura (Fruit fly).